A 331-amino-acid polypeptide reads, in one-letter code: Ferredoxin--NADP reductase (331 aa).

T14, E33, Q41, Y46, V86, F120, D284, and S327 together coordinate FAD.

This sequence belongs to the ferredoxin--NADP reductase type 2 family. In terms of assembly, homodimer. FAD is required as a cofactor.

The catalysed reaction is 2 reduced [2Fe-2S]-[ferredoxin] + NADP(+) + H(+) = 2 oxidized [2Fe-2S]-[ferredoxin] + NADPH. This Picrophilus torridus (strain ATCC 700027 / DSM 9790 / JCM 10055 / NBRC 100828 / KAW 2/3) protein is Ferredoxin--NADP reductase.